The chain runs to 68 residues: DNA-directed RNA polymerase subunit Rpo10 (68 aa).

4 residues coordinate Zn(2+): C7, C10, C44, and C45.

The protein belongs to the archaeal Rpo10/eukaryotic RPB10 RNA polymerase subunit family. In terms of assembly, part of the RNA polymerase complex. Zn(2+) serves as cofactor.

The protein localises to the cytoplasm. It carries out the reaction RNA(n) + a ribonucleoside 5'-triphosphate = RNA(n+1) + diphosphate. Functionally, DNA-dependent RNA polymerase (RNAP) catalyzes the transcription of DNA into RNA using the four ribonucleoside triphosphates as substrates. The protein is DNA-directed RNA polymerase subunit Rpo10 of Methanococcus maripaludis (strain C6 / ATCC BAA-1332).